We begin with the raw amino-acid sequence, 241 residues long: UPF0280 protein MK0206 (241 aa).

This sequence belongs to the UPF0280 family.

The protein is UPF0280 protein MK0206 of Methanopyrus kandleri (strain AV19 / DSM 6324 / JCM 9639 / NBRC 100938).